A 223-amino-acid polypeptide reads, in one-letter code: Pre-hexon-linking protein VIII (223 aa).

The residue at position 64 (threonine 64) is a Phosphothreonine; by host. The propeptide occupies 112-153 (GALAPRDLYALTLRGRGIQLNEDLPLSASTLRPDGIFQLGGG). Serine 170 is subject to Phosphoserine; by host.

This sequence belongs to the adenoviridae hexon-linking protein family. As to quaternary structure, interacts with the peripentonal hexons as well as the hexons in the facets. Part of a complex composed of the core-capsid bridging protein, the endosome lysis protein VI and the hexon-linking protein VIII; these interactions bridge the virus core to the capsid. In terms of processing, cleaved by the viral protease during virion maturation. May cause the middle segment to be shed from the capsid.

It is found in the virion. Its subcellular location is the host nucleus. Its function is as follows. Structural component of the virion that acts as a cement protein on the capsid interior and which glue the peripentonal hexons and group-of-nine hexons together. This is Pre-hexon-linking protein VIII from Porcine adenovirus A serotype 3 (PAdV-3).